The chain runs to 429 residues: Argininosuccinate lyase (429 aa).

The protein belongs to the lyase 1 family. Argininosuccinate lyase subfamily.

The protein resides in the cytoplasm. The enzyme catalyses 2-(N(omega)-L-arginino)succinate = fumarate + L-arginine. Its pathway is amino-acid biosynthesis; L-arginine biosynthesis; L-arginine from L-ornithine and carbamoyl phosphate: step 3/3. The chain is Argininosuccinate lyase from Pyrobaculum arsenaticum (strain DSM 13514 / JCM 11321 / PZ6).